A 384-amino-acid polypeptide reads, in one-letter code: Probable splicing factor YJU2B (384 aa).

The disordered stretch occupies residues 1 to 28; the sequence is MGERKGTNKYYPPDFDPAKHGSLNGYRN. Residues 183–212 are a coiled coil; it reads NSLLRSKFREEKKQIKEEEERDQALLTKAS. Residues 275–331 form a disordered region; that stretch reads GIRTKTPSVPGISPVSLGVVRRTSKEENKAEDKSVESPDGSRSRKAEGMCRKEETGC. Residues 297-331 show a composition bias toward basic and acidic residues; that stretch reads TSKEENKAEDKSVESPDGSRSRKAEGMCRKEETGC.

It belongs to the CWC16 family.

It localises to the nucleus. Functionally, may be involved in mRNA splicing. In Xenopus laevis (African clawed frog), this protein is Probable splicing factor YJU2B (yju2b).